The sequence spans 960 residues: Angiomotin-like protein 1 (960 aa).

A disordered region spans residues 196-248; the sequence is SQFFRGQQPPPPPPQQQPGAVGHSYYMAGGASQKARTEGRPTVSRANSGQAHK. S243, S271, and S297 each carry phosphoserine. Residues 261–281 are a coiled coil; sequence RSLSERIMQLSLERNGAKQHL. 3 disordered regions span residues 277–317, 381–407, and 413–432; these read AKQH…EYPF, LPFP…LHSV, and PPMA…SQQL. Residues 388–401 are compositionally biased toward low complexity; that stretch reads QQHSPVSSQNSSVS. Coiled coils occupy residues 440 to 641 and 667 to 697; these read VERA…WLER and ALME…VEES. S722 is modified (phosphoserine). Residues 731–761 adopt a coiled-coil conformation; the sequence is SLEAHIWQEEEEVVQATRRCQDMEYTIKNLH. The tract at residues 775 to 826 is disordered; the sequence is QQRSRKDAGKTDSSSLRPARSVPSIAAATGTHSRQTSLTSSQLAEERKEEKT. S795, S807, and S830 each carry phosphoserine. The segment covering 804–817 has biased composition (polar residues); sequence GTHSRQTSLTSSQL. A disordered region spans residues 842 to 952; that stretch reads NDHASTPLLP…NLLHKPEFPD (111 aa). Residues 845–870 are compositionally biased toward low complexity; it reads ASTPLLPTPSAATLSPPTPGTSASSA. Residues 898–911 show a composition bias toward polar residues; that stretch reads PTRSRLSGTPSNSP. S904 carries the post-translational modification Phosphoserine. T906 carries the post-translational modification Phosphothreonine. At S910 the chain carries Phosphoserine. The short motif at 957–960 is the PDZ-binding element; the sequence is EVLI.

This sequence belongs to the angiomotin family. In terms of processing, polyubiquitinated by NEDD4, leading to proteasomal degradation.

The protein resides in the cell junction. Its subcellular location is the tight junction. Functionally, inhibits the Wnt/beta-catenin signaling pathway, probably by recruiting CTNNB1 to recycling endosomes and hence preventing its translocation to the nucleus. This is Angiomotin-like protein 1 (AMOTL1) from Bos taurus (Bovine).